The sequence spans 345 residues: Biotin synthase (345 aa).

A Radical SAM core domain is found at 67–295 (YKVQLASLLS…KSRIRLSAGR (229 aa)). Positions 82, 86, and 89 each coordinate [4Fe-4S] cluster. [2Fe-2S] cluster contacts are provided by Cys-126, Cys-158, Cys-218, and Arg-290.

The protein belongs to the radical SAM superfamily. Biotin synthase family. In terms of assembly, homodimer. It depends on [4Fe-4S] cluster as a cofactor. The cofactor is [2Fe-2S] cluster.

The enzyme catalyses (4R,5S)-dethiobiotin + (sulfur carrier)-SH + 2 reduced [2Fe-2S]-[ferredoxin] + 2 S-adenosyl-L-methionine = (sulfur carrier)-H + biotin + 2 5'-deoxyadenosine + 2 L-methionine + 2 oxidized [2Fe-2S]-[ferredoxin]. It functions in the pathway cofactor biosynthesis; biotin biosynthesis; biotin from 7,8-diaminononanoate: step 2/2. In terms of biological role, catalyzes the conversion of dethiobiotin (DTB) to biotin by the insertion of a sulfur atom into dethiobiotin via a radical-based mechanism. The sequence is that of Biotin synthase from Prochlorococcus marinus (strain NATL1A).